Reading from the N-terminus, the 64-residue chain is Large ribosomal subunit protein bL35 (64 aa).

A compositionally biased stretch (basic residues) spans 1–14; it reads MKNKTHKGTAKRVK. Positions 1-30 are disordered; the sequence is MKNKTHKGTAKRVKVTGSGKLVREQANRRH. A compositionally biased stretch (basic and acidic residues) spans 21–30; it reads LVREQANRRH.

It belongs to the bacterial ribosomal protein bL35 family.

The sequence is that of Large ribosomal subunit protein bL35 from Corynebacterium efficiens (strain DSM 44549 / YS-314 / AJ 12310 / JCM 11189 / NBRC 100395).